The primary structure comprises 85 residues: UPF0291 protein SGO_0570 (85 aa).

A disordered region spans residues 56-85; the sequence is EDGNDVTPEKLRQVQREKGLHGRSLDDPNS. The segment covering 62–85 has biased composition (basic and acidic residues); the sequence is TPEKLRQVQREKGLHGRSLDDPNS.

This sequence belongs to the UPF0291 family.

It localises to the cytoplasm. In Streptococcus gordonii (strain Challis / ATCC 35105 / BCRC 15272 / CH1 / DL1 / V288), this protein is UPF0291 protein SGO_0570.